We begin with the raw amino-acid sequence, 355 residues long: 12-oxophytodienoate reductase-like protein (355 aa).

FMN contacts are provided by residues 30–32 (ALT), Ala-63, and Gln-105. 175–178 (NASS) is a substrate binding site. Tyr-181 acts as the Proton donor in catalysis. Arg-265 lines the substrate pocket. FMN-binding positions include Gly-288 and 309–310 (GR).

This sequence belongs to the NADH:flavin oxidoreductase/NADH oxidase family. FMN is required as a cofactor. In terms of tissue distribution, weakly expressed in flowers and roots.

It localises to the cytoplasm. Its function is as follows. May be involved in the biosynthesis or metabolism of oxylipin signaling molecules. This is 12-oxophytodienoate reductase-like protein (OPR2) from Solanum lycopersicum (Tomato).